A 97-amino-acid chain; its full sequence is Co-chaperonin GroES (97 aa).

Belongs to the GroES chaperonin family. As to quaternary structure, heptamer of 7 subunits arranged in a ring. Interacts with the chaperonin GroEL.

Its subcellular location is the cytoplasm. Its function is as follows. Together with the chaperonin GroEL, plays an essential role in assisting protein folding. The GroEL-GroES system forms a nano-cage that allows encapsulation of the non-native substrate proteins and provides a physical environment optimized to promote and accelerate protein folding. GroES binds to the apical surface of the GroEL ring, thereby capping the opening of the GroEL channel. This is Co-chaperonin GroES from Aeromonas salmonicida (strain A449).